Here is a 69-residue protein sequence, read N- to C-terminus: Large ribosomal subunit protein bL28 (69 aa).

The disordered stretch occupies residues 1–27; sequence MSRRCSVSGKGPLVGNNVSHANNKTKR.

Belongs to the bacterial ribosomal protein bL28 family.

The polypeptide is Large ribosomal subunit protein bL28 (Sulfurovum sp. (strain NBC37-1)).